We begin with the raw amino-acid sequence, 54 residues long: UPF0391 membrane protein pRL90066 (54 aa).

2 helical membrane passes run 5–25 (ALVF…GIAG) and 28–48 (ASIA…SLVM).

The protein belongs to the UPF0391 family.

It is found in the cell membrane. This chain is UPF0391 membrane protein pRL90066, found in Rhizobium johnstonii (strain DSM 114642 / LMG 32736 / 3841) (Rhizobium leguminosarum bv. viciae).